Here is a 116-residue protein sequence, read N- to C-terminus: Aspartate 1-decarboxylase (116 aa).

Catalysis depends on S25, which acts as the Schiff-base intermediate with substrate; via pyruvic acid. S25 bears the Pyruvic acid (Ser) mark. Residue T57 coordinates substrate. Residue Y58 is the Proton donor of the active site. 73–75 (GAA) contacts substrate.

This sequence belongs to the PanD family. Heterooctamer of four alpha and four beta subunits. Pyruvate serves as cofactor. Post-translationally, is synthesized initially as an inactive proenzyme, which is activated by self-cleavage at a specific serine bond to produce a beta-subunit with a hydroxyl group at its C-terminus and an alpha-subunit with a pyruvoyl group at its N-terminus.

The protein localises to the cytoplasm. It catalyses the reaction L-aspartate + H(+) = beta-alanine + CO2. It participates in cofactor biosynthesis; (R)-pantothenate biosynthesis; beta-alanine from L-aspartate: step 1/1. Functionally, catalyzes the pyruvoyl-dependent decarboxylation of aspartate to produce beta-alanine. The sequence is that of Aspartate 1-decarboxylase from Phocaeicola vulgatus (strain ATCC 8482 / DSM 1447 / JCM 5826 / CCUG 4940 / NBRC 14291 / NCTC 11154) (Bacteroides vulgatus).